A 115-amino-acid polypeptide reads, in one-letter code: Large ribosomal subunit protein bL19 (115 aa).

It belongs to the bacterial ribosomal protein bL19 family.

Functionally, this protein is located at the 30S-50S ribosomal subunit interface and may play a role in the structure and function of the aminoacyl-tRNA binding site. The polypeptide is Large ribosomal subunit protein bL19 (Francisella tularensis subsp. tularensis (strain FSC 198)).